The chain runs to 444 residues: Deoxyguanosinetriphosphate triphosphohydrolase-like protein (444 aa).

Residues Met1–Gln26 are disordered. The 192-residue stretch at Arg59 to Ala250 folds into the HD domain.

Belongs to the dGTPase family. Type 2 subfamily.

This is Deoxyguanosinetriphosphate triphosphohydrolase-like protein from Shewanella woodyi (strain ATCC 51908 / MS32).